Here is a 255-residue protein sequence, read N- to C-terminus: NAD kinase (255 aa).

Asp44 acts as the Proton acceptor in catalysis. NAD(+)-binding positions include 44–45, 114–115, Asp144, Ala152, and 155–160; these read DG, NE, and TAYNLS.

This sequence belongs to the NAD kinase family. It depends on a divalent metal cation as a cofactor.

Its subcellular location is the cytoplasm. The enzyme catalyses NAD(+) + ATP = ADP + NADP(+) + H(+). Its function is as follows. Involved in the regulation of the intracellular balance of NAD and NADP, and is a key enzyme in the biosynthesis of NADP. Catalyzes specifically the phosphorylation on 2'-hydroxyl of the adenosine moiety of NAD to yield NADP. The chain is NAD kinase from Hyphomonas neptunium (strain ATCC 15444).